A 509-amino-acid polypeptide reads, in one-letter code: Zinc finger CCCH-type with G patch domain-containing protein (509 aa).

Residues 41–61 (TRGSEPEATSDTKTPETSDNI) are disordered. Over residues 47 to 58 (EATSDTKTPETS) the composition is skewed to polar residues. The segment at 155-178 (PCNYFLEGECRFDEVRCRYSHGAL) adopts a C3H1-type zinc-finger fold. The disordered stretch occupies residues 254–278 (DDDLTSESEESNETDGSDAGNDSDM). The 47-residue stretch at 310 to 356 (TRGIGSKLMANMGYIHGTGLGSDGRGIVTPVSAQILPQGRSLDACME) folds into the G-patch domain. The disordered stretch occupies residues 410-433 (GSQQTENANKKTKPNNLQQHSNKT). Residues 423–433 (PNNLQQHSNKT) are compositionally biased toward polar residues.

The protein resides in the nucleus. In terms of biological role, transcription repressor. This is Zinc finger CCCH-type with G patch domain-containing protein from Drosophila mojavensis (Fruit fly).